Reading from the N-terminus, the 500-residue chain is Neuronal pentraxin receptor (500 aa).

Over 1 to 2 the chain is Cytoplasmic; that stretch reads MK. A helical; Signal-anchor for type II membrane protein membrane pass occupies residues 3-23; sequence FLAVLLAAGMLAFLGAVICII. The Extracellular portion of the chain corresponds to 24 to 500; the sequence is ASVPLAASPA…FDVCKGRAKA (477 aa). Asparagine 42 carries N-linked (GlcNAc...) asparagine glycosylation. The segment covering 42 to 63 has biased composition (low complexity); the sequence is NASVASGAAASPGPQRSLSALH. Disordered regions lie at residues 42 to 81 and 162 to 183; these read NASV…PAAS and ESGL…ADGP. Asparagine 216 carries an N-linked (GlcNAc...) asparagine glycan. Residues 292 to 494 enclose the Pentraxin (PTX) domain; the sequence is DAFKISIPIR…GATKAAFDVC (203 aa). The cysteines at positions 322 and 383 are disulfide-linked. The Ca(2+) site is built by asparagine 347, glutamate 425, glutamine 426, aspartate 427, and glutamine 437. A glycan (N-linked (GlcNAc...) asparagine) is linked at asparagine 463.

In terms of assembly, heteropentamer with NPTX1 and/or NPTX2. Also binds taipoxin-associated calcium-binding protein 49 (TCBP49/RCN2). Interacts with KLHL2. It depends on Ca(2+) as a cofactor. Ubiquitinated by a cullin-RING-based BCR (BTB-CUL3-RBX1) E3 ubiquitin-protein ligase complex containing KLHL2.

It localises to the membrane. In terms of biological role, may be involved in mediating uptake of synaptic material during synapse remodeling or in mediating the synaptic clustering of AMPA glutamate receptors at a subset of excitatory synapses. This is Neuronal pentraxin receptor (NPTXR) from Homo sapiens (Human).